A 396-amino-acid polypeptide reads, in one-letter code: L-lactate dehydrogenase (396 aa).

An FMN hydroxy acid dehydrogenase domain is found at 1–380; it reads MIISAASDYR…TQDSLVQVLG (380 aa). Tyr24 provides a ligand contact to substrate. FMN is bound by residues Ser106 and Gln127. Tyr129 is a binding site for substrate. Residue Thr155 coordinates FMN. Arg164 is a binding site for substrate. An FMN-binding site is contributed by Lys251. The active-site Proton acceptor is His275. A substrate-binding site is contributed by Arg278. 306–330 lines the FMN pocket; that stretch reads DSGIRNGLDVVRMIALGADTVLLGR.

This sequence belongs to the FMN-dependent alpha-hydroxy acid dehydrogenase family. Requires FMN as cofactor.

The protein resides in the cell inner membrane. It catalyses the reaction (S)-lactate + A = pyruvate + AH2. Catalyzes the conversion of L-lactate to pyruvate. Is coupled to the respiratory chain. The protein is L-lactate dehydrogenase of Escherichia coli O45:K1 (strain S88 / ExPEC).